Reading from the N-terminus, the 834-residue chain is MAP kinase phosphatase with leucine-rich repeats protein 1 (834 aa).

Residues 1-103 (MIFKKLFSKG…GSGTTKESKK (103 aa)) are disordered. The segment covering 36–78 (GSGTNTNGLSNSTTNPSSIHSTPTTPTTTASTNLTNSNKLSTL) has biased composition (low complexity). The segment covering 79–98 (APITNGNRSLRGSKDGSGTT) has biased composition (polar residues). LRR repeat units follow at residues 160–181 (ELRSLILDFNKITEIPEQIGLL), 183–204 (NLKHLSLAANQLSQVPEFLSQL), 206–226 (SLESLELGINQFTSFPLNICK), 229–251 (SLTLLRLETNNIKSLPDDFINLE), 252–273 (NLKDLSLLDNQLKEIPDSLPNN), 274–292 (IEKLNLGCNDIINSYSKSL), 298–319 (SLTTLNLSENKIEVLDESLSCL), 321–342 (NVKTLILDCNMIKVIPGSVLGS), 345–366 (SLVTLNLPHNFISDLPAEIVTL), and 368–389 (NLRIIDLRGNNFEFCKNYPSSE). The disordered stretch occupies residues 503-584 (YEKQENDENN…ENPLKESQGK (82 aa)). Over residues 511 to 536 (NNSVTLETTTTISIASDNTDEASIQI) the composition is skewed to polar residues. Composition is skewed to basic and acidic residues over residues 538–554 (QKEDGDKENLENDDKLL) and 569–582 (KQQEQQENPLKESQ). Residues 555 to 615 (QESFSENNNN…IRLEKIKYQE (61 aa)) adopt a coiled-coil conformation. A Tyrosine-protein phosphatase domain is found at 695–834 (VPDLIIDKLY…LKKFEKDLSK (140 aa)). Cys778 serves as the catalytic Phosphocysteine intermediate.

It belongs to the protein-tyrosine phosphatase family. Non-receptor class dual specificity subfamily.

It catalyses the reaction O-phospho-L-tyrosyl-[protein] + H2O = L-tyrosyl-[protein] + phosphate. The enzyme catalyses O-phospho-L-seryl-[protein] + H2O = L-seryl-[protein] + phosphate. It carries out the reaction O-phospho-L-threonyl-[protein] + H2O = L-threonyl-[protein] + phosphate. Probable phosphatase with dual specificity toward Ser/Thr and Tyr-containing proteins. Dephosphorylates pNPP, in vitro. Essential for proper regulation of erkB (erk2) and optimal motility during development. The chain is MAP kinase phosphatase with leucine-rich repeats protein 1 (mpl1) from Dictyostelium discoideum (Social amoeba).